The sequence spans 1087 residues: Exportin-7 (1087 aa).

The Importin N-terminal domain occupies 30-96; the sequence is AEKALVEFTN…RNYVLNYLAT (67 aa).

This sequence belongs to the exportin family.

The protein localises to the cytoplasm. Its subcellular location is the nucleus. Mediates the nuclear export of proteins (cargos) with broad substrate specificity. The polypeptide is Exportin-7 (XPO7) (Gallus gallus (Chicken)).